The primary structure comprises 898 residues: MAAEHPFKNILTTLPKPGGGEYGKFYSLPALNDPRIDKLPYSIRILLESAIRNCDNFQVNQNDVEKIIDWENTSPKLAEIPFKPARVLLQDFTGVPAVVDLAAMRDAMAKLGSDANKINPLVPVDLVIDHSVQVDVARSPNAVQSNMELEFKRNNERFGFLKWGSTAFHNMLVVPPGSGIVHQVNLEYLGRVVFNTDGIMYPDSVVGTDSHTTMIDGLGVAGWGVGGIEAEATMLGQPMSMVLPGVVGFKLTGKLQNGVTATDLVLTVTQMLRKHGVVGKFVEFYGEGMGKLSLADRATIANMSPEYGATMGFFPVDHVTLDYLKLTGRSDETVAMIEAYLRANKMFVDYNEPQTERVYSSYLELDLNEVEPCISGPKRPHDRVLLKEMKSDWHSCLDNRVGFKGFAVPKEQQDKVVKFDFHGQPAELKHGSVVIAAITSCTNTSNPSVMLGAALVAKKACELGLEVKPWVKTSLAPGSGVVTKYLLQSGLQEYLNKQGFHVVGYGCTTCIGNSGDLDESVSAAISENDVVAAAVLSGNRNFEGRVHPLTRANYLASPPLVVAYALAGTVDIDFEKEPIGVGKDGKEVFFRDIWPSTEEIAEVVQSSVLPDMFKSTYEAITKGNPMWNQLTVPEASLYSWDPNSTYIHEPPYFKDMTMSPPGPHGVKNAYCLLNFGDSITTDHISPAGSIHKDSPAAKYLLERGVDRKDFNSYGSRRGNDEVMARGTFANIRIVNKFLNGEVGPKTVHVPTGEKLYVFDAALKYKSEGHDTIVLAGAEYGSGSSRDWAAKGPMLLGVKAVIAKSFERIHRSNLVGMGIIPLCFKAGEDADSLGLTGHERYTIDLPTNVSEIRPGQDITVTTDNGKSFTCTLRFDTEVELAYFNHGGILPYVIRNLAQN.

Substrate is bound by residues Gln-90 and 209-211 (DSH). 3 residues coordinate [4Fe-4S] cluster: Cys-441, Cys-507, and Cys-510. Substrate contacts are provided by residues Arg-540, Arg-545, Arg-703, and 784–785 (SR).

The protein belongs to the aconitase/IPM isomerase family. [4Fe-4S] cluster is required as a cofactor.

Its subcellular location is the cytoplasm. It carries out the reaction citrate = D-threo-isocitrate. It participates in carbohydrate metabolism; glyoxylate and dicarboxylate metabolism. Its function is as follows. Catalyzes the isomerization of citrate to isocitrate via cis-aconitate. This Oryza sativa subsp. japonica (Rice) protein is Putative aconitate hydratase, cytoplasmic.